The primary structure comprises 88 residues: Sec-independent protein translocase protein TatA (88 aa).

Residues 4 to 24 (LSIWHWLIVLAVVLVLFVGGG) form a helical membrane-spanning segment. The interval 45–88 (ADDETMEGSTGSGGHIAPPGPAAGTVQRDASFSGTGRPSGSSTP) is disordered. The segment covering 75–88 (SFSGTGRPSGSSTP) has biased composition (low complexity).

It belongs to the TatA/E family. The Tat system comprises two distinct complexes: a TatABC complex, containing multiple copies of TatA, TatB and TatC subunits, and a separate TatA complex, containing only TatA subunits. Substrates initially bind to the TatABC complex, which probably triggers association of the separate TatA complex to form the active translocon.

The protein localises to the cell inner membrane. Its function is as follows. Part of the twin-arginine translocation (Tat) system that transports large folded proteins containing a characteristic twin-arginine motif in their signal peptide across membranes. TatA could form the protein-conducting channel of the Tat system. In Gluconacetobacter diazotrophicus (strain ATCC 49037 / DSM 5601 / CCUG 37298 / CIP 103539 / LMG 7603 / PAl5), this protein is Sec-independent protein translocase protein TatA.